Consider the following 159-residue polypeptide: Ribonuclease H (159 aa).

One can recognise an RNase H type-1 domain in the interval N8–K150. Residues D17, E55, D77, and D142 each coordinate Mg(2+).

Belongs to the RNase H family. In terms of assembly, monomer. Requires Mg(2+) as cofactor.

The protein resides in the cytoplasm. The enzyme catalyses Endonucleolytic cleavage to 5'-phosphomonoester.. Endonuclease that specifically degrades the RNA of RNA-DNA hybrids. This is Ribonuclease H from Desulforamulus reducens (strain ATCC BAA-1160 / DSM 100696 / MI-1) (Desulfotomaculum reducens).